Consider the following 479-residue polypeptide: ATP synthase subunit beta (479 aa).

An ATP-binding site is contributed by 153–160 (GGAGVGKT).

This sequence belongs to the ATPase alpha/beta chains family. As to quaternary structure, F-type ATPases have 2 components, CF(1) - the catalytic core - and CF(0) - the membrane proton channel. CF(1) has five subunits: alpha(3), beta(3), gamma(1), delta(1), epsilon(1). CF(0) has three main subunits: a(1), b(2) and c(9-12). The alpha and beta chains form an alternating ring which encloses part of the gamma chain. CF(1) is attached to CF(0) by a central stalk formed by the gamma and epsilon chains, while a peripheral stalk is formed by the delta and b chains.

It is found in the cell membrane. It catalyses the reaction ATP + H2O + 4 H(+)(in) = ADP + phosphate + 5 H(+)(out). Its function is as follows. Produces ATP from ADP in the presence of a proton gradient across the membrane. The catalytic sites are hosted primarily by the beta subunits. The protein is ATP synthase subunit beta of Lactobacillus delbrueckii subsp. bulgaricus (strain ATCC 11842 / DSM 20081 / BCRC 10696 / JCM 1002 / NBRC 13953 / NCIMB 11778 / NCTC 12712 / WDCM 00102 / Lb 14).